We begin with the raw amino-acid sequence, 157 residues long: DNA gyrase inhibitor (157 aa).

The protein belongs to the DNA gyrase inhibitor family. As to quaternary structure, interacts with DNA gyrase.

It localises to the cytoplasm. Its function is as follows. Inhibits the supercoiling activity of DNA gyrase. Acts by inhibiting DNA gyrase at an early step, prior to (or at the step of) binding of DNA by the gyrase. It protects cells against toxins that target DNA gyrase, by inhibiting activity of these toxins and reducing the formation of lethal double-strand breaks in the cell. This Yersinia enterocolitica serotype O:8 / biotype 1B (strain NCTC 13174 / 8081) protein is DNA gyrase inhibitor.